The primary structure comprises 448 residues: UDP-N-acetylmuramoylalanine--D-glutamate ligase (448 aa).

Residue 116 to 122 (GSNAKST) coordinates ATP.

This sequence belongs to the MurCDEF family.

The protein localises to the cytoplasm. It carries out the reaction UDP-N-acetyl-alpha-D-muramoyl-L-alanine + D-glutamate + ATP = UDP-N-acetyl-alpha-D-muramoyl-L-alanyl-D-glutamate + ADP + phosphate + H(+). It participates in cell wall biogenesis; peptidoglycan biosynthesis. In terms of biological role, cell wall formation. Catalyzes the addition of glutamate to the nucleotide precursor UDP-N-acetylmuramoyl-L-alanine (UMA). This chain is UDP-N-acetylmuramoylalanine--D-glutamate ligase, found in Pseudomonas syringae pv. tomato (strain ATCC BAA-871 / DC3000).